A 103-amino-acid chain; its full sequence is Large ribosomal subunit protein bL21 (103 aa).

It belongs to the bacterial ribosomal protein bL21 family. Part of the 50S ribosomal subunit. Contacts protein L20.

In terms of biological role, this protein binds to 23S rRNA in the presence of protein L20. The sequence is that of Large ribosomal subunit protein bL21 from Vesicomyosocius okutanii subsp. Calyptogena okutanii (strain HA).